Here is a 266-residue protein sequence, read N- to C-terminus: Type III pantothenate kinase (266 aa).

6 to 13 (DAGNTNIV) is a binding site for ATP. Substrate contacts are provided by residues Tyr100 and 107-110 (GADR). The active-site Proton acceptor is the Asp109. Asp129 serves as a coordination point for K(+). ATP is bound at residue Thr132. Thr184 is a substrate binding site.

This sequence belongs to the type III pantothenate kinase family. In terms of assembly, homodimer. Requires NH4(+) as cofactor. It depends on K(+) as a cofactor.

The protein resides in the cytoplasm. It catalyses the reaction (R)-pantothenate + ATP = (R)-4'-phosphopantothenate + ADP + H(+). It participates in cofactor biosynthesis; coenzyme A biosynthesis; CoA from (R)-pantothenate: step 1/5. Catalyzes the phosphorylation of pantothenate (Pan), the first step in CoA biosynthesis. The sequence is that of Type III pantothenate kinase from Clostridium beijerinckii (strain ATCC 51743 / NCIMB 8052) (Clostridium acetobutylicum).